Consider the following 81-residue polypeptide: Large ribosomal subunit protein bL31B (81 aa).

Belongs to the bacterial ribosomal protein bL31 family. Type B subfamily. Part of the 50S ribosomal subunit.

This Borrelia garinii subsp. bavariensis (strain ATCC BAA-2496 / DSM 23469 / PBi) (Borreliella bavariensis) protein is Large ribosomal subunit protein bL31B.